Here is a 4151-residue protein sequence, read N- to C-terminus: Mycoketide-CoA synthase (4151 aa).

Positions 2–32 form a coiled coil; sequence VDQLQHATEALRKALVQVERLKRTNRALLER. Positions 34-457 constitute a Ketosynthase family 3 (KS3) 1 domain; sequence SEPIAIVGMS…GTNAHVIIEA (424 aa). Module stretches follow at residues 35 to 2038 and 2057 to 4070; these read EPIA…RTEL and DPIA…RREL. Cysteine 203 acts as the Acyl-thioester intermediate; for beta-ketoacyl synthase 1 activity in catalysis. Residues histidine 338 and histidine 379 each act as for beta-ketoacyl synthase 1 activity in the active site. Residues 559 to 880 form an acyltransferase 1 region; sequence VFVFPGQGSQ…AASAFVAGVA (322 aa). Catalysis depends on serine 650, which acts as the Acyl-ester intermediate; for acyltransferase 1 activity. The tract at residues 926-1048 is N-terminal hotdog fold 1; it reads HPLLGAVVDL…GILRPGSVEP (123 aa). The tract at residues 926–1194 is dehydratase 1; that stretch reads HPLLGAVVDL…VARPVTERQL (269 aa). The 270-residue stretch at 926–1195 folds into the PKS/mFAS DH 1 domain; it reads HPLLGAVVDL…ARPVTERQLL (270 aa). The Proton acceptor; for dehydratase activity 1 role is filled by histidine 958. A C-terminal hotdog fold 1 region spans residues 1060–1195; that stretch reads AVTVDVADGY…ARPVTERQLL (136 aa). Residue aspartate 1120 is the Proton donor; for dehydratase activity 1 of the active site. Residues 1366-1671 form an enoyl reductase 1 region; that stretch reads GTFENLRLEP…QARHTGKVVM (306 aa). The beta-ketoacyl reductase 1 stretch occupies residues 1680–1858; that stretch reads GTVLITGGTG…AISLGWGLWD (179 aa). Tyrosine 1828 (for beta-ketoacyl reductase 1 activity) is an active-site residue. The Carrier 1 domain occupies 1963-2038; sequence AVLLGLVRLH…RLASYIRTEL (76 aa). Serine 1998 bears the O-(pantetheine 4'-phosphoryl)serine mark. Positions 2056–2480 constitute a Ketosynthase family 3 (KS3) 2 domain; sequence EDPIAIVGMA…GTNAHVIIEA (425 aa). Cysteine 2226 serves as the catalytic Acyl-thioester intermediate; for beta-ketoacyl synthase 2 activity. Active-site for beta-ketoacyl synthase 2 activity residues include histidine 2361 and histidine 2402. Positions 2582–2893 are acyltransferase 2; that stretch reads VFVFPGQGSQ…AVAQGFVTGM (312 aa). Residue serine 2672 is the Acyl-ester intermediate; for acyltransferase 2 activity of the active site. Residues 2940–3062 are N-terminal hotdog fold 2; the sequence is HALLGAVIDL…GALRAGSAEP (123 aa). The interval 2940–3215 is dehydratase 2; that stretch reads HALLGAVIDL…ARPVTDQQLR (276 aa). In terms of domain architecture, PKS/mFAS DH 2 spans 2940–3215; the sequence is HALLGAVIDL…ARPVTDQQLR (276 aa). Residue histidine 2972 is the Proton acceptor; for dehydratase activity 2 of the active site. The tract at residues 3074–3215 is C-terminal hotdog fold 2; it reads AVPVEVADGY…ARPVTDQQLR (142 aa). The active-site Proton donor; for dehydratase activity 2 is the aspartate 3135. Residues 3395 to 3701 are enoyl reductase 2; it reads GTFENLRLEL…QARHTGKVVM (307 aa). The segment at 3710–3888 is beta-ketoacyl reductase 2; sequence GTVLITGGTG…AISLGWGLWD (179 aa). Tyrosine 3858 (for beta-ketoacyl reductase 2 activity) is an active-site residue. The Carrier 2 domain maps to 3995-4070; sequence AVLLDLVRSH…ALAGYMRREL (76 aa). Serine 4030 carries the post-translational modification O-(pantetheine 4'-phosphoryl)serine.

In terms of assembly, forms a large supramolecular assembly mediated through specific interactions between the N- and C-terminus linkers.

The enzyme catalyses a medium-chain fatty acyl-CoA + 5 (S)-methylmalonyl-CoA + 5 malonyl-CoA + 22 NADPH + 32 H(+) = a mycoketide-CoA + 10 CO2 + 22 NADP(+) + 10 CoA + 11 H2O. It functions in the pathway lipid metabolism; fatty acid metabolism. In terms of biological role, involved in the synthesis of beta-D-mannosyl phosphomycoketide (MPM), an antigenic mycobacterial polyketide. Binds a fatty acyl-CoA as a starter unit, and extends it by five rounds of alternative additions of malonyl-CoA and methylmalonyl-CoA extender units. Depending on the starter unit, the enzyme forms mycoketide-CoAs of different lengths. Shows preference for small-/medium-chain starter fatty acyl substrates. Uses a hybrid modularly iterative mechanism, by forming a supramolecular assembly to perform repetitive cycles of iterations. The sequence is that of Mycoketide-CoA synthase from Mycobacterium tuberculosis (strain ATCC 25618 / H37Rv).